Reading from the N-terminus, the 502-residue chain is Neuronal acetylcholine receptor subunit alpha-7 (502 aa).

An N-terminal signal peptide occupies residues 1–23 (MGLRALMLWLLAAAGLVRESLQG). Topologically, residues 24-233 (EFQRKLYKEL…VTMRRRTLYY (210 aa)) are extracellular. Ca(2+) contacts are provided by R42 and V44. N-linked (GlcNAc...) asparagine glycans are attached at residues N46, N90, and N133. A disulfide bridge connects residues C150 and C164. The Ca(2+) site is built by T172 and Y210. The cysteines at positions 212 and 213 are disulfide-linked. The next 3 membrane-spanning stretches (helical) occupy residues 234–254 (GLNL…VFLL), 262–282 (ISLG…VAEI), and 295–315 (QYFA…VIVL). Residues 316–469 (QYHHHDPDGG…WKFAASVVDR (154 aa)) lie on the Cytoplasmic side of the membrane. Residues 470–490 (LCLMAFSVFTIICTIGILMSA) form a helical membrane-spanning segment.

This sequence belongs to the ligand-gated ion channel (TC 1.A.9) family. Acetylcholine receptor (TC 1.A.9.1) subfamily. Alpha-7/CHRNA7 sub-subfamily. Homopentamer. Can also form heteropentamers with CHRNB2, mainly found in basal forebrain cholinergic neurons.

Its subcellular location is the postsynaptic cell membrane. It is found in the cell membrane. It carries out the reaction Ca(2+)(in) = Ca(2+)(out). The enzyme catalyses K(+)(in) = K(+)(out). The catalysed reaction is Na(+)(in) = Na(+)(out). It catalyses the reaction choline(out) = choline(in). It carries out the reaction NH4(+)(in) = NH4(+)(out). The enzyme catalyses L-arginine(in) = L-arginine(out). The catalysed reaction is guanidine(out) = guanidine(in). With respect to regulation, activated by a myriad of ligands such as acetylcholine, cytisine, nicotine, choline and epibatidine. Activity is modulated by positive allosteric modulators (PAMs), such as flavonoids, with a wide range of chemical diversity, pharmacological sensitivity and efficacy. AChR activity is inhibited by the antagonists alpha-conotoxons RgIA, ImI and ImII, small disulfide-constrained peptides from cone snails. Its function is as follows. Component of neuronal acetylcholine receptors (nAChRs) that function as pentameric, ligand-gated cation channels with high calcium permeability among other activities. nAChRs are excitatory neurotrasnmitter receptors formed by a collection of nAChR subunits known to mediate synaptic transmission in the nervous system and the neuromuscular junction. Each nAchR subunit confers differential attributes to channel properties, including activation, deactivation and desensitization kinetics, pH sensitivity, cation permeability, and binding to allosteric modulators. CHRNA7 is an homooligomeric neuronal acetylcholine receptor abundantly expressed in the central nervous system. Characterized by a fast desensitization and high calcium permeability. Also expressed in non-neuronal cells such as immune cells like lymphocytes, monocytes and macrophages. The polypeptide is Neuronal acetylcholine receptor subunit alpha-7 (CHRNA7) (Gallus gallus (Chicken)).